Here is a 704-residue protein sequence, read N- to C-terminus: Elongation factor G (704 aa).

The tr-type G domain maps to 8 to 290 (EKYRNIGICA…GVVRYLPAPN (283 aa)). GTP-binding positions include 17 to 24 (AHVDAGKT), 88 to 92 (DTPGH), and 142 to 145 (NKMD).

The protein belongs to the TRAFAC class translation factor GTPase superfamily. Classic translation factor GTPase family. EF-G/EF-2 subfamily.

The protein resides in the cytoplasm. Functionally, catalyzes the GTP-dependent ribosomal translocation step during translation elongation. During this step, the ribosome changes from the pre-translocational (PRE) to the post-translocational (POST) state as the newly formed A-site-bound peptidyl-tRNA and P-site-bound deacylated tRNA move to the P and E sites, respectively. Catalyzes the coordinated movement of the two tRNA molecules, the mRNA and conformational changes in the ribosome. The sequence is that of Elongation factor G from Francisella tularensis subsp. tularensis (strain FSC 198).